We begin with the raw amino-acid sequence, 317 residues long: DNA-directed RNA polymerase subunit alpha (317 aa).

The alpha N-terminal domain (alpha-NTD) stretch occupies residues 1–234 (MKQFVRPEFI…AHLEFFIDLN (234 aa)). The interval 250–317 (DKELDRTVEE…ASLGLAFRQS (68 aa)) is alpha C-terminal domain (alpha-CTD).

This sequence belongs to the RNA polymerase alpha chain family. In terms of assembly, homodimer. The RNAP catalytic core consists of 2 alpha, 1 beta, 1 beta' and 1 omega subunit. When a sigma factor is associated with the core the holoenzyme is formed, which can initiate transcription.

It carries out the reaction RNA(n) + a ribonucleoside 5'-triphosphate = RNA(n+1) + diphosphate. In terms of biological role, DNA-dependent RNA polymerase catalyzes the transcription of DNA into RNA using the four ribonucleoside triphosphates as substrates. This is DNA-directed RNA polymerase subunit alpha from Mycoplasma mycoides subsp. mycoides SC (strain CCUG 32753 / NCTC 10114 / PG1).